We begin with the raw amino-acid sequence, 525 residues long: Allantoate deiminase (525 aa).

Residues 1 to 53 (MAVPHPSSSSSRSHPFLSHVYHTSFHHHHHHNHPSLVLFWCLVFSLLSPLALS) form the signal peptide. Over residues 56 to 75 (SSSSSSSSDSSSSSSSHISL) the composition is skewed to low complexity. Residues 56 to 78 (SSSSSSSSDSSSSSSSHISLGIG) are disordered. N-linked (GlcNAc...) asparagine glycosylation occurs at Asn156. Residues His167, Asp178, Glu215, His281, and His499 each contribute to the Mn(2+) site.

This sequence belongs to the peptidase M20A family. In terms of assembly, homodimer. It depends on Mn(2+) as a cofactor. In terms of tissue distribution, expressed in seedlings, roots, stems, leaves, flowers, siliques and seeds.

It localises to the endoplasmic reticulum. The enzyme catalyses allantoate + H2O + 2 H(+) = (S)-2-ureidoglycine + NH4(+) + CO2. Inhibited by borate, fluoride, L-Asn and L-Asp, but not by phenylphosphorodiamidate. In terms of biological role, involved in the catabolism of purine nucleotides. Can use allantoate as substrate, but not Nalpha-carbamoyl-L-Asp, Nalpha-carbamoyl-L-Ala or Nalpha-carbamoyl-Gly. The sequential activity of AAH, UGLYAH and UAH allows a complete purine breakdown without the intermediate generation of urea. Involved in the regulation of seed maturation and seed dormancy. The protein is Allantoate deiminase of Arabidopsis thaliana (Mouse-ear cress).